The following is a 235-amino-acid chain: Triosephosphate isomerase (235 aa).

Residue 7–9 (NFK) coordinates substrate. Histidine 92 acts as the Electrophile in catalysis. Glutamate 161 serves as the catalytic Proton acceptor. Residues glycine 167 and serine 197 each contribute to the substrate site.

This sequence belongs to the triosephosphate isomerase family. In terms of assembly, homodimer.

The protein localises to the cytoplasm. The enzyme catalyses D-glyceraldehyde 3-phosphate = dihydroxyacetone phosphate. The protein operates within carbohydrate biosynthesis; gluconeogenesis. It participates in carbohydrate degradation; glycolysis; D-glyceraldehyde 3-phosphate from glycerone phosphate: step 1/1. In terms of biological role, involved in the gluconeogenesis. Catalyzes stereospecifically the conversion of dihydroxyacetone phosphate (DHAP) to D-glyceraldehyde-3-phosphate (G3P). The chain is Triosephosphate isomerase from Helicobacter hepaticus (strain ATCC 51449 / 3B1).